The following is a 98-amino-acid chain: Feather keratin 1 (98 aa).

Belongs to the avian keratin family. In terms of assembly, the avian keratins (F-ker, S-ker, C-ker and B-ker) are a complex mixture of very similar polypeptides.

The protein is Feather keratin 1 of Gallus gallus (Chicken).